The following is a 451-amino-acid chain: Probable tyrosyl-DNA phosphodiesterase (451 aa).

The disordered stretch occupies residues 1–34 (MKRTIQETPGPSSTTVPPPKKLNSQRNGSNLEPG). A compositionally biased stretch (polar residues) spans 22-32 (LNSQRNGSNLE). Histidine 131 acts as the Nucleophile in catalysis. Lysine 133 serves as a coordination point for substrate. The interval 266-269 (SIGS) is interaction with DNA. Histidine 356 functions as the Proton donor/acceptor in the catalytic mechanism. Lysine 358 contributes to the substrate binding site.

Belongs to the tyrosyl-DNA phosphodiesterase family.

The protein localises to the nucleus. In terms of biological role, DNA repair enzyme that can remove a variety of covalent adducts from DNA through hydrolysis of a 3'-phosphodiester bond, giving rise to DNA with a free 3' phosphate. Catalyzes the hydrolysis of dead-end complexes between DNA and the topoisomerase I active site tyrosine residue. Hydrolyzes 3'-phosphoglycolates on protruding 3' ends on DNA double-strand breaks due to DNA damage by radiation and free radicals. Acts on blunt-ended double-strand DNA breaks and on single-stranded DNA. May have low 3'exonuclease activity and may be able to remove a single nucleoside from the 3'end of DNA and RNA molecules with 3'hydroxyl groups. Has no exonuclease activity towards DNA or RNA with a 3'phosphate. The protein is Probable tyrosyl-DNA phosphodiesterase of Caenorhabditis elegans.